The primary structure comprises 627 residues: Neuronal acetylcholine receptor subunit alpha-4 (627 aa).

An N-terminal signal peptide occupies residues 1–28 (MELGGPGAPRLLPPLLLLLGTGLLRASS). Topologically, residues 29–242 (HVETRAHAEE…ITYAFVIRRL (214 aa)) are extracellular. An N-linked (GlcNAc...) asparagine glycan is attached at Asn57. Residues Val76 and Glu78 each contribute to the Ca(2+) site. N-linked (GlcNAc...) asparagine glycosylation is found at Asn107 and Asn174. 2 cysteine pairs are disulfide-bonded: Cys161–Cys175 and Cys225–Cys226. Residues 243-267 (PLFYTINLIIPCLLISCLTVLVFYL) traverse the membrane as a helical segment. Cys271 is lipidated: S-palmitoyl cysteine. Transmembrane regions (helical) follow at residues 275 to 293 (ITLCISVLLSLTVFLLLIT) and 309 to 330 (YLLFTMIFVTLSIVITVFVLNV). The Cytoplasmic segment spans residues 331 to 600 (HHRSPRTHTM…WKYVAMVIDR (270 aa)). Disordered stretches follow at residues 382 to 479 (PRFW…EAVE) and 497 to 559 (DATS…RHLP). 3 positions are modified to phosphoserine: Ser424, Ser538, and Ser541. A helical transmembrane segment spans residues 601 to 619 (IFLWMFIIVCLLGTVGLFL).

This sequence belongs to the ligand-gated ion channel (TC 1.A.9) family. Acetylcholine receptor (TC 1.A.9.1) subfamily. Alpha-4/CHRNA4 sub-subfamily. As to quaternary structure, neuronal AChR is composed of two different types of subunits: alpha and beta. CHRNA4 forms heteropentameric neuronal acetylcholine receptors with CHRNB2 and CHRNB4, as well as CHRNA5 and CHRNB3 as accesory subunits. Found in two major stoichiometric forms, LS (low agonist sensitivity): (CHRNA4)3:(CHRNB2)2 and HS (high agonist sensitivity): (CHRNA4)2:(CHRNB2)3, the two stoichiometric forms differ in their unitary conductance, calcium permeability, ACh sensitivity and potentiation by divalent cation. Cells produce predominantly an (CHRNA4)3:(CHRNB2)2 nAChR. The (CHRNA4)2:(CHRNB2)3 expression is selectively up-regulated by nicotine and has lower single channel conductance and calcium permeability. In the striatum, also forms CHRNA4:CHRNA6:CHRNB2 complexes. Also found in the stoichiometric form: (CHRNA4:CHRNB2)2:CHRNB3. Interacts with RIC3; which is required for proper folding and assembly. Interacts with LYPD6.

Its subcellular location is the synaptic cell membrane. The protein resides in the cell membrane. The enzyme catalyses Ca(2+)(in) = Ca(2+)(out). The catalysed reaction is K(+)(in) = K(+)(out). It catalyses the reaction Na(+)(in) = Na(+)(out). Activated by a myriad of ligands such as acetylcholine, cytisine, nicotine, choline and epibatidine. Channel potentiation by calcium is stoichiometry-selective, CHRNA4:CHRNB2 nACh receptor is achieved by calcium association with topographically distinct sites framed by anionic residues within the CHRNA4 subunit and between the CHRNA4 and CHRNB2 subunits. nAChR activity is inhibited by the antagonist alpha-conotoxins BuIA, PnIA, GID and MII, small disulfide-constrained peptides from cone snails. In terms of biological role, component of neuronal acetylcholine receptors (nAChRs) that function as pentameric, ligand-gated cation channels with high calcium permeability among other activities. nAChRs are excitatory neurotrasnmitter receptors formed by a collection of nAChR subunits known to mediate synaptic transmission in the nervous system and the neuromuscular junction. Each nAchR subunit confers differential attributes to channel properties, including activation, deactivation and desensitization kinetics, pH sensitivity, cation permeability, and binding to allosteric modulators. CHRNA4 forms heteropentameric neuronal acetylcholine receptors with CHRNB2 and CHRNB4, as well as CHRNA5 and CHRNB3 as accesory subunits. Is the most abundant nAChR subtype expressed in the central nervous system. Found in two major stoichiometric forms,(CHRNA4)3:(CHRNB2)2 and (CHRNA4)2:(CHRNB2)3, the two stoichiometric forms differ in their unitary conductance, calcium permeability, ACh sensitivity and potentiation by divalent cation. Involved in the modulation of calcium-dependent signaling pathways, influences the release of neurotransmitters, including dopamine, glutamate and GABA. This chain is Neuronal acetylcholine receptor subunit alpha-4 (CHRNA4), found in Pan troglodytes (Chimpanzee).